We begin with the raw amino-acid sequence, 181 residues long: Probable calcium-binding protein CML43 (181 aa).

EF-hand domains follow at residues 24–59 (LNAL…LGLD), 107–142 (SPES…LGLP), and 145–180 (GEIE…VVVP). Ca(2+) is bound by residues Asp37, Asn39, Asp41, Glu48, Asp120, Asp122, Asp124, Glu131, Asp158, Asn160, Asp162, Arg164, and Glu169.

Expressed specifically in roots.

In terms of biological role, calcium-binding protein that may mediate calcium-dependent signal during plant defense response. This is Probable calcium-binding protein CML43 (CML43) from Arabidopsis thaliana (Mouse-ear cress).